The following is a 546-amino-acid chain: Probable protein kinase UbiB (546 aa).

The region spanning 124–502 (DFEIKPLASA…HVRQGQSRYF (379 aa)) is the Protein kinase domain. Residues 130 to 138 (LASASIAQV) and K153 each bind ATP. Residue D288 is the Proton acceptor of the active site. 2 helical membrane passes run 501-521 (YFLGIGATLVLSGTFLLVSRP) and 522-542 (EWGLMPGWLMAGGLIAWFVGW).

The protein belongs to the ABC1 family. UbiB subfamily.

The protein resides in the cell inner membrane. It participates in cofactor biosynthesis; ubiquinone biosynthesis [regulation]. Its function is as follows. Is probably a protein kinase regulator of UbiI activity which is involved in aerobic coenzyme Q (ubiquinone) biosynthesis. This Shigella boydii serotype 18 (strain CDC 3083-94 / BS512) protein is Probable protein kinase UbiB.